A 288-amino-acid chain; its full sequence is Putative alkaline ceramidase dcd3A (288 aa).

Residue asparagine 23 is glycosylated (N-linked (GlcNAc...) asparagine). 7 helical membrane-spanning segments follow: residues 41–61, 78–98, 105–125, 146–166, 172–192, 206–226, and 240–260; these read IISLFGIYGIWIMMPNFGTGV, VILSYISLIVVGVGSAFYHAT, LFDELPMIYTALIMLYIMVTV, HLLPYLLIAYGLFVTITILVI, ILQVSFGALVFYVVFHSIYLI, SYLYKYAFVSMLVGFTCWVVE, and LHAFWHFFTGMSTYVWTQFLI.

Belongs to the alkaline ceramidase family.

It localises to the membrane. The chain is Putative alkaline ceramidase dcd3A (dcd3A) from Dictyostelium discoideum (Social amoeba).